The primary structure comprises 239 residues: Phosphoribosylaminoimidazole-succinocarboxamide synthase (239 aa).

The protein belongs to the SAICAR synthetase family.

It catalyses the reaction 5-amino-1-(5-phospho-D-ribosyl)imidazole-4-carboxylate + L-aspartate + ATP = (2S)-2-[5-amino-1-(5-phospho-beta-D-ribosyl)imidazole-4-carboxamido]succinate + ADP + phosphate + 2 H(+). It participates in purine metabolism; IMP biosynthesis via de novo pathway; 5-amino-1-(5-phospho-D-ribosyl)imidazole-4-carboxamide from 5-amino-1-(5-phospho-D-ribosyl)imidazole-4-carboxylate: step 1/2. This chain is Phosphoribosylaminoimidazole-succinocarboxamide synthase, found in Shouchella clausii (strain KSM-K16) (Alkalihalobacillus clausii).